We begin with the raw amino-acid sequence, 342 residues long: P21 prophage-derived major head protein (342 aa).

This sequence belongs to the lambda phage major capsid protein family.

In Escherichia coli O6:H1 (strain CFT073 / ATCC 700928 / UPEC), this protein is P21 prophage-derived major head protein.